We begin with the raw amino-acid sequence, 333 residues long: Phenylalanine--tRNA ligase alpha subunit (333 aa).

A Mg(2+)-binding site is contributed by Glu-254.

The protein belongs to the class-II aminoacyl-tRNA synthetase family. Phe-tRNA synthetase alpha subunit type 1 subfamily. As to quaternary structure, tetramer of two alpha and two beta subunits. It depends on Mg(2+) as a cofactor.

It localises to the cytoplasm. The enzyme catalyses tRNA(Phe) + L-phenylalanine + ATP = L-phenylalanyl-tRNA(Phe) + AMP + diphosphate + H(+). The polypeptide is Phenylalanine--tRNA ligase alpha subunit (Xylella fastidiosa (strain M23)).